The sequence spans 405 residues: tRNA N6-adenosine threonylcarbamoyltransferase, mitochondrial (405 aa).

A mitochondrion-targeting transit peptide spans 1–19; sequence MAKYISNLSRIAVVRGRVS. A divalent metal cation-binding residues include histidine 138 and histidine 142. Residues 160–164, aspartate 193, glycine 213, glutamate 217, 320–321, and threonine 348 contribute to the substrate site; these read LISGG and SN. Residue aspartate 349 participates in a divalent metal cation binding.

Belongs to the KAE1 / TsaD family. As to quaternary structure, monomer. A divalent metal cation serves as cofactor.

It is found in the mitochondrion. The catalysed reaction is L-threonylcarbamoyladenylate + adenosine(37) in tRNA = N(6)-L-threonylcarbamoyladenosine(37) in tRNA + AMP + H(+). Functionally, required for the formation of a threonylcarbamoyl group on adenosine at position 37 (t(6)A37) in mitochondrial tRNAs that read codons beginning with adenine. Probably involved in the transfer of the threonylcarbamoyl moiety of threonylcarbamoyl-AMP (TC-AMP) to the N6 group of A37. Involved in mitochondrial genome maintenance. The polypeptide is tRNA N6-adenosine threonylcarbamoyltransferase, mitochondrial (Xenopus tropicalis (Western clawed frog)).